The following is a 90-amino-acid chain: Probable Fe(2+)-trafficking protein (90 aa).

Belongs to the Fe(2+)-trafficking protein family.

Its function is as follows. Could be a mediator in iron transactions between iron acquisition and iron-requiring processes, such as synthesis and/or repair of Fe-S clusters in biosynthetic enzymes. This chain is Probable Fe(2+)-trafficking protein, found in Xylella fastidiosa (strain 9a5c).